Here is a 412-residue protein sequence, read N- to C-terminus: Branched-chain alpha-ketoacid dehydrogenase kinase (412 aa).

Residues 1-30 constitute a mitochondrion transit peptide; the sequence is MILTSVLGSGPRSWSSLWPLLGSSLSLRAR. At Ser-31 the chain carries Phosphoserine. The residue at position 52 (Ser-52) is a Phosphoserine; by autocatalysis. The Histidine kinase domain occupies 159–404; sequence LDDHKDVVTL…DVYLRLRHID (246 aa). Lys-192 and Lys-233 each carry N6-acetyllysine. ATP contacts are provided by Asn-279 and Asp-315. Asn-279 contributes to the Mg(2+) binding site. K(+) is bound by residues Val-328, Asp-330, and Phe-333. ATP-binding residues include Thr-334 and Thr-335. Phosphoserine occurs at positions 356 and 360. Residues His-364, Gly-367, and Leu-370 each contribute to the ATP site. Gly-367 lines the K(+) pocket.

This sequence belongs to the PDK/BCKDK protein kinase family. As to quaternary structure, homodimer. Homotetramer. Dimerizes through interaction of two opposing nucleotide-binding domains. Interacts with E2 component of the branched-chain alpha-ketoacid dehydrogenase (BCKDH) complex. Competes with BCKDK for binding to the E2 component; this interaction is modulated by branched-chain alpha-keto acids. At steady state, BCKDH holoenzyme contains BCKDK and BCKDHA is phosphorylated. In response to high levels of branched-chain alpha-keto acids, the inhibitory BCKDK is replaced by activating PPM1K leading to BCKDHA dephosphorylation and BCAA degradation. In terms of processing, autophosphorylated. In terms of tissue distribution, ubiquitous.

Its subcellular location is the mitochondrion matrix. The protein localises to the mitochondrion. It carries out the reaction L-seryl-[3-methyl-2-oxobutanoate dehydrogenase] + ATP = O-phospho-L-seryl-[3-methyl-2-oxobutanoate dehydrogenase] + ADP + H(+). It catalyses the reaction L-seryl-[protein] + ATP = O-phospho-L-seryl-[protein] + ADP + H(+). Serine/threonine-protein kinase component of macronutrients metabolism. Forms a functional kinase and phosphatase pair with PPM1K, serving as a metabolic regulatory node that coordinates branched-chain amino acids (BCAAs) with glucose and lipid metabolism via two distinct phosphoprotein targets: mitochondrial BCKDHA subunit of the branched-chain alpha-ketoacid dehydrogenase (BCKDH) complex and cytosolic ACLY, a lipogenic enzyme of Krebs cycle. Phosphorylates and inactivates mitochondrial BCKDH complex a multisubunit complex consisting of three multimeric components each involved in different steps of BCAA catabolism: E1 composed of BCKDHA and BCKDHB, E2 core composed of DBT monomers, and E3 composed of DLD monomers. Associates with the E2 component of BCKDH complex and phosphorylates BCKDHA on Ser-334, leading to conformational changes that interrupt substrate channeling between E1 and E2 and inactivates the BCKDH complex. Phosphorylates ACLY on Ser-455 in response to changes in cellular carbohydrate abundance such as occurs during fasting to feeding metabolic transition. Refeeding stimulates MLXIPL/ChREBP transcription factor, leading to increased BCKDK to PPM1K expression ratio, phosphorylation and activation of ACLY that ultimately results in the generation of malonyl-CoA and oxaloacetate immediate substrates of de novo lipogenesis and glucogenesis, respectively. Recognizes phosphosites having SxxE/D canonical motif. In Mus musculus (Mouse), this protein is Branched-chain alpha-ketoacid dehydrogenase kinase (Bckdk).